The primary structure comprises 430 residues: Serine--tRNA ligase (430 aa).

Residue threonine 237–glutamate 239 participates in L-serine binding. Arginine 268–glutamate 270 provides a ligand contact to ATP. Position 291 (glutamate 291) interacts with L-serine. Glutamate 355–serine 358 contributes to the ATP binding site. Serine 391 contributes to the L-serine binding site.

It belongs to the class-II aminoacyl-tRNA synthetase family. Type-1 seryl-tRNA synthetase subfamily. As to quaternary structure, homodimer. The tRNA molecule binds across the dimer.

The protein resides in the cytoplasm. It carries out the reaction tRNA(Ser) + L-serine + ATP = L-seryl-tRNA(Ser) + AMP + diphosphate + H(+). The enzyme catalyses tRNA(Sec) + L-serine + ATP = L-seryl-tRNA(Sec) + AMP + diphosphate + H(+). It participates in aminoacyl-tRNA biosynthesis; selenocysteinyl-tRNA(Sec) biosynthesis; L-seryl-tRNA(Sec) from L-serine and tRNA(Sec): step 1/1. Its function is as follows. Catalyzes the attachment of serine to tRNA(Ser). Is also able to aminoacylate tRNA(Sec) with serine, to form the misacylated tRNA L-seryl-tRNA(Sec), which will be further converted into selenocysteinyl-tRNA(Sec). This chain is Serine--tRNA ligase, found in Yersinia enterocolitica serotype O:8 / biotype 1B (strain NCTC 13174 / 8081).